Reading from the N-terminus, the 774-residue chain is 1,4-alpha-glucan branching enzyme GlgB 1 (774 aa).

The disordered stretch occupies residues 1–66; the sequence is MTPRPSSSGP…AEVAVSPAPD (66 aa). Residues 29-40 are compositionally biased toward basic residues; that stretch reads KPAKAAKKKAPR. The segment covering 41 to 55 has biased composition (low complexity); it reads RTTASANASATTSVS. The active-site Nucleophile is Asp-457. The Proton donor role is filled by Glu-510. The interval 748 to 774 is disordered; the sequence is YGGGDVVNPDPVKPEPQGGTAARRASG.

This sequence belongs to the glycosyl hydrolase 13 family. GlgB subfamily. As to quaternary structure, monomer.

The catalysed reaction is Transfers a segment of a (1-&gt;4)-alpha-D-glucan chain to a primary hydroxy group in a similar glucan chain.. It participates in glycan biosynthesis; glycogen biosynthesis. Catalyzes the formation of the alpha-1,6-glucosidic linkages in glycogen by scission of a 1,4-alpha-linked oligosaccharide from growing alpha-1,4-glucan chains and the subsequent attachment of the oligosaccharide to the alpha-1,6 position. The chain is 1,4-alpha-glucan branching enzyme GlgB 1 (glgB1) from Streptomyces coelicolor (strain ATCC BAA-471 / A3(2) / M145).